Here is a 377-residue protein sequence, read N- to C-terminus: uncharacterized protein (377 aa).

This is an uncharacterized protein from Bacillus subtilis (strain 168).